An 83-amino-acid chain; its full sequence is RNA-binding protein Hfq (83 aa).

A Sm domain is found at 10–69 (DPFLNALRREHVPVSIYLVNGIKLQGQIESFDQYVVLLRNTVTQMVYKHAISTIVPGRAV).

Belongs to the Hfq family. As to quaternary structure, homohexamer.

Its function is as follows. RNA chaperone that binds small regulatory RNA (sRNAs) and mRNAs to facilitate mRNA translational regulation in response to envelope stress, environmental stress and changes in metabolite concentrations. Also binds with high specificity to tRNAs. This chain is RNA-binding protein Hfq, found in Paracidovorax citrulli (strain AAC00-1) (Acidovorax citrulli).